The chain runs to 295 residues: sn-glycerol-3-phosphate transport system permease protein UgpA (295 aa).

Residues 1–11 (MSSSRPVFRSR) are Cytoplasmic-facing. Residues 12-32 (WLPYLLVAPQLIITVIFFIWP) traverse the membrane as a helical segment. The Periplasmic segment spans residues 33–80 (AGEALWYSLQSVDPFGFSSQFVGLDNFVTLFHDSYYLDAFWTTIKFST). An ABC transmembrane type-1 domain is found at 76-284 (IKFSTFVTVS…FLVIVLTVVQ (209 aa)). A helical membrane pass occupies residues 81–101 (FVTVSGLLVSLFFAALVEYIV). Topologically, residues 102–109 (RGSRFYQT) are cytoplasmic. Residues 110–130 (LMLLPYAVAPAVAAVLWIFLF) form a helical membrane-spanning segment. Residues 131–156 (NPGRGLITHFLAEFGYDWNHAQNSGQ) are Periplasmic-facing. Residues 157-177 (AMFLVVFASVWKQISYNFLFF) form a helical membrane-spanning segment. Over 178-207 (YAALQSIPRSLIEAAAIDGAGPIRRFFKIA) the chain is Cytoplasmic. Residues 208-228 (LPLIAPVSFFLLVVNLVYAFF) form a helical membrane-spanning segment. Topologically, residues 229-262 (DTFPVIDAATSGGPVQATTTLIYKIYREGFTGLD) are periplasmic. Residues 263 to 283 (LASSAAQSVVLMFLVIVLTVV) form a helical membrane-spanning segment. Over 284–295 (QFRYVESKVRYQ) the chain is Cytoplasmic.

It belongs to the binding-protein-dependent transport system permease family. UgpAE subfamily. As to quaternary structure, the complex is composed of two ATP-binding proteins (UgpC), two transmembrane proteins (UgpA and UgpE) and a solute-binding protein (UgpB).

The protein localises to the cell inner membrane. Functionally, part of the ABC transporter complex UgpBAEC involved in sn-glycerol-3-phosphate (G3P) import. Probably responsible for the translocation of the substrate across the membrane. This is sn-glycerol-3-phosphate transport system permease protein UgpA (ugpA) from Escherichia coli (strain UTI89 / UPEC).